Reading from the N-terminus, the 963-residue chain is Vacuolar membrane protease (963 aa).

The Cytoplasmic portion of the chain corresponds to 1–15; it reads MVSSRRGFNPIAFTP. Residues 16 to 36 traverse the membrane as a helical segment; it reads WPVTILTSLVYLALIIPIIVV. Residues 37 to 391 lie on the Vacuolar side of the membrane; that stretch reads HHLVPPAPKQ…FQLNTLFGLS (355 aa). N-linked (GlcNAc...) asparagine glycans are attached at residues Asn-111 and Asn-114. Zn(2+) contacts are provided by His-170 and Asp-182. Glu-216 (proton acceptor) is an active-site residue. Zn(2+) contacts are provided by Glu-217, Glu-242, and His-315. A helical membrane pass occupies residues 392-412; the sequence is VALLVVAPLLLILTSVALFAV. Topologically, residues 413–441 are cytoplasmic; the sequence is DKMYMFSMYTYLSESGGQVSLYGLRGMFR. A helical transmembrane segment spans residues 442–462; sequence FPLILGISTALTVALAFLIMK. Residues 463-473 are Vacuolar-facing; it reads VNPFIIYSSPY. A helical transmembrane segment spans residues 474–494; that stretch reads AVWSMMLSTCMFFAWFISCVA. The Cytoplasmic portion of the chain corresponds to 495–504; it reads DFARPSALHR. A helical transmembrane segment spans residues 505-525; that stretch reads AYAFSWMFGILWVFLVIATVY. Topologically, residues 526–535 are vacuolar; that stretch reads QRQHGIASSY. A helical transmembrane segment spans residues 536 to 556; it reads FIVFYFAGVSVATWISYLELF. Over 557-668 the chain is Cytoplasmic; sequence GLSTTQDYAR…WSIYLVSSAW (112 aa). The tract at residues 569-618 is disordered; sequence SRLSDRTPSSDSHLLAPSADELPSSGSVAGRDFNPEDVEDEEPTESTSLL. The segment covering 603 to 612 has biased composition (acidic residues); the sequence is PEDVEDEEPT. Residues 669-689 traverse the membrane as a helical segment; that stretch reads ILQFLLVAPIVLILLGQLGLF. The Vacuolar portion of the chain corresponds to 690–705; sequence LTSATYQIGADGGSQF. Residues 706-726 traverse the membrane as a helical segment; it reads IIYIGIAVLSVLILLPLFPFI. Residues 727 to 732 are Cytoplasmic-facing; the sequence is HRFTYH. The helical transmembrane segment at 733 to 753 threads the bilayer; sequence IPTFMLFVLIGTLVYNLTAFP. Residues 754-963 lie on the Vacuolar side of the membrane; that stretch reads FSHNSRLKVA…LVEGSYSFKL (210 aa). Residue Asn-835 is glycosylated (N-linked (GlcNAc...) asparagine).

Belongs to the peptidase M28 family. It depends on Zn(2+) as a cofactor.

Its subcellular location is the vacuole membrane. May be involved in vacuolar sorting and osmoregulation. The protein is Vacuolar membrane protease of Arthroderma gypseum (strain ATCC MYA-4604 / CBS 118893) (Microsporum gypseum).